Here is a 423-residue protein sequence, read N- to C-terminus: Serine hydroxymethyltransferase (423 aa).

(6S)-5,6,7,8-tetrahydrofolate contacts are provided by residues leucine 120 and 124–126 (GHL). At lysine 229 the chain carries N6-(pyridoxal phosphate)lysine. 353 to 355 (SPF) lines the (6S)-5,6,7,8-tetrahydrofolate pocket.

This sequence belongs to the SHMT family. In terms of assembly, homodimer. Requires pyridoxal 5'-phosphate as cofactor.

It is found in the cytoplasm. It catalyses the reaction (6R)-5,10-methylene-5,6,7,8-tetrahydrofolate + glycine + H2O = (6S)-5,6,7,8-tetrahydrofolate + L-serine. It functions in the pathway one-carbon metabolism; tetrahydrofolate interconversion. It participates in amino-acid biosynthesis; glycine biosynthesis; glycine from L-serine: step 1/1. Functionally, catalyzes the reversible interconversion of serine and glycine with tetrahydrofolate (THF) serving as the one-carbon carrier. This reaction serves as the major source of one-carbon groups required for the biosynthesis of purines, thymidylate, methionine, and other important biomolecules. Also exhibits THF-independent aldolase activity toward beta-hydroxyamino acids, producing glycine and aldehydes, via a retro-aldol mechanism. The chain is Serine hydroxymethyltransferase from Prochlorococcus marinus (strain MIT 9515).